The primary structure comprises 117 residues: Large ribosomal subunit protein uL18 (117 aa).

Belongs to the universal ribosomal protein uL18 family. In terms of assembly, part of the 50S ribosomal subunit; part of the 5S rRNA/L5/L18/L25 subcomplex. Contacts the 5S and 23S rRNAs.

In terms of biological role, this is one of the proteins that bind and probably mediate the attachment of the 5S RNA into the large ribosomal subunit, where it forms part of the central protuberance. This Buchnera aphidicola subsp. Acyrthosiphon kondoi (Acyrthosiphon kondoi symbiotic bacterium) protein is Large ribosomal subunit protein uL18.